We begin with the raw amino-acid sequence, 238 residues long: Enoyl-CoA delta isomerase 3 (238 aa).

Belongs to the enoyl-CoA hydratase/isomerase family.

The protein localises to the cytoplasm. The protein resides in the nucleus. The catalysed reaction is a (3Z)-enoyl-CoA = a 4-saturated (2E)-enoyl-CoA. It catalyses the reaction a (3E)-enoyl-CoA = a 4-saturated (2E)-enoyl-CoA. It functions in the pathway lipid metabolism; fatty acid beta-oxidation. Functionally, able to isomerize both 3-cis and 3-trans double bonds into the 2-trans form in a range of enoyl-CoA species. Essential for the beta oxidation of unsaturated fatty acids. The chain is Enoyl-CoA delta isomerase 3 from Arabidopsis thaliana (Mouse-ear cress).